Here is a 92-residue protein sequence, read N- to C-terminus: Small ribosomal subunit protein uS19c (92 aa).

This sequence belongs to the universal ribosomal protein uS19 family.

It is found in the plastid. The protein localises to the chloroplast. Protein S19 forms a complex with S13 that binds strongly to the 16S ribosomal RNA. This is Small ribosomal subunit protein uS19c from Huperzia lucidula (Shining clubmoss).